The chain runs to 613 residues: Histone acetyltransferase KAT7 (613 aa).

The segment at 1-175 is disordered; sequence MAIGVVKRNA…SDLSHRPKRR (175 aa). A phosphoserine mark is found at Ser12, Ser52, Ser55, Ser59, and Ser66. Residues 44 to 59 show a composition bias toward low complexity; that stretch reads VTRSSARLSQSSQDSS. Phosphothreonine occurs at positions 87 and 90. Residues 98 to 107 are compositionally biased toward polar residues; it reads QTRSSGSETE. The residue at position 104 (Ser104) is a Phosphoserine. Residue Thr106 is modified to Phosphothreonine. Positions 112–127 are enriched in basic and acidic residues; that stretch reads FSDRETKNTADHDESP. Ser113 and Ser126 each carry phosphoserine. At Thr130 the chain carries Phosphothreonine. A compositionally biased stretch (low complexity) spans 136–147; that stretch reads PSSESDIDISSP. Positions 150–170 are enriched in basic and acidic residues; it reads SHDESIAKDMSLKDSGSDLSH. 4 positions are modified to phosphoserine: Ser160, Ser164, Ser166, and Ser180. Residues 178–221 form a CCHHC-type zinc finger; the sequence is HESYNFNMKCPTPGCNSLGHLTGKHERHFSISGCPLYHNLSADE. N6-acetyllysine is present on residues Lys201 and Lys279. Lys325 participates in a covalent cross-link: Glycyl lysine isopeptide (Lys-Gly) (interchain with G-Cter in SUMO2). Positions 334-609 constitute an MYST-type HAT domain; the sequence is EGSNMIKTIA…MDPSCLKWTP (276 aa). Residue Lys340 forms a Glycyl lysine isopeptide (Lys-Gly) (interchain with G-Cter in ubiquitin) linkage. A C2HC MYST-type zinc finger spans residues 367-392; sequence LYMCEFCLKYMKSQTILRRHMAKCVW. Zn(2+) contacts are provided by Cys370, Cys373, His386, and Cys390. N6-acetyllysine; by autocatalysis is present on Lys434. Acetyl-CoA contacts are provided by residues 477–479 and 485–490; these read ILT and RQGYGK. Ser508 bears the Phosphoserine mark. The active-site Proton donor/acceptor is the Glu510. 2 residues coordinate acetyl-CoA: Ser514 and Ser523.

Belongs to the MYST (SAS/MOZ) family. Component of the HBO1 complex composed of KAT7/HBO1, MEAF6, ING4 or ING5, and one scaffold subunit: complexes containing BRPF scaffold (BRPF1, BRD1/BRPF2 or BRPF3) direct KAT7/HBO1 specificity towards H3K14ac, while complexes containing JADE scaffold (JADE1, JADE2 and JADE3) mediate acetylation of histone H4. Interacts with MCM2 and ORC1. Interacts with the androgen receptor (AR) in the presence of dihydrotestosterone. Interacts with CDT1. Interacts with MAP2K1 and CUL1. Interacts with p53/TP53; leading to inhibit histone acetyltransferase activity. Post-translationally, phosphorylated at Ser-52 and Ser-55 by ATR in response to DNA damage, promoting its ubiquitination by the CRL4(DDB2) complex and subsequent degradation. Phosphorylation at Ser-52 and Ser-55 by ATR in response to ultraviolet-induced DNA, promotes localization to DNA damage sites. Phosphorylation at Ser-59 by PLK1 during mitosis seems important for prereplicative complex formation and DNA replication licensing, and requires prior phosphorylation at Thr-87 and Thr-90 by CDK1. Phosphorylated by MAP2K1, which accelerates its degradation. Ubiquitinated at Lys-340, leading to proteasomal degradation. Ubiquitinated by the CRL4(DDB2) complex following phosphorylation by ATR, leading to its subsequent degradation. In terms of processing, autoacetylation at Lys-434 is required for proper function. In terms of tissue distribution, widely expressed in adult tissues.

The protein localises to the nucleus. The protein resides in the chromosome. It is found in the centromere. Its subcellular location is the cytoplasm. It localises to the cytosol. It catalyses the reaction L-lysyl-[protein] + acetyl-CoA = N(6)-acetyl-L-lysyl-[protein] + CoA + H(+). With respect to regulation, histone acetyltransferase activity is inhibited by GMNN in the context of a complex with CDT1, inhibiting histone H4 acetylation and DNA replication licensing. Its function is as follows. Catalytic subunit of histone acetyltransferase HBO1 complexes, which specifically mediate acetylation of histone H3 at 'Lys-14' (H3K14ac), thereby regulating various processes, such as gene transcription, protein ubiquitination, immune regulation, stem cell pluripotent and self-renewal maintenance and embryonic development. Some complexes also catalyze acetylation of histone H4 at 'Lys-5', 'Lys-8' and 'Lys-12' (H4K5ac, H4K8ac and H4K12ac, respectively), regulating DNA replication initiation, regulating DNA replication initiation. Specificity of the HBO1 complexes is determined by the scaffold subunit: complexes containing BRPF scaffold (BRPF1, BRD1/BRPF2 or BRPF3) direct KAT7/HBO1 specificity towards H3K14ac, while complexes containing JADE (JADE1, JADE2 and JADE3) scaffold direct KAT7/HBO1 specificity towards histone H4. H3K14ac promotes transcriptional elongation by facilitating the processivity of RNA polymerase II. Acts as a key regulator of hematopoiesis by forming a complex with BRD1/BRPF2, directing KAT7/HBO1 specificity towards H3K14ac and promoting erythroid differentiation. H3K14ac is also required for T-cell development. KAT7/HBO1-mediated acetylation facilitates two consecutive steps, licensing and activation, in DNA replication initiation: H3K14ac facilitates the activation of replication origins, and histone H4 acetylation (H4K5ac, H4K8ac and H4K12ac) facilitates chromatin loading of MCM complexes, promoting DNA replication licensing. Acts as a positive regulator of centromeric CENPA assembly: recruited to centromeres and mediates histone acetylation, thereby preventing centromere inactivation mediated by SUV39H1, possibly by increasing histone turnover/exchange. Involved in nucleotide excision repair: phosphorylation by ATR in response to ultraviolet irradiation promotes its localization to DNA damage sites, where it mediates histone acetylation to facilitate recruitment of XPC at the damaged DNA sites. Acts as an inhibitor of NF-kappa-B independently of its histone acetyltransferase activity. Plays a central role in the maintenance of leukemia stem cells in acute myeloid leukemia (AML). Acts by mediating acetylation of histone H3 at 'Lys-14' (H3K14ac), thereby facilitating the processivity of RNA polymerase II to maintain the high expression of key genes, such as HOXA9 and HOXA10 that help to sustain the functional properties of leukemia stem cells. The protein is Histone acetyltransferase KAT7 of Mus musculus (Mouse).